Here is a 346-residue protein sequence, read N- to C-terminus: Selenide, water dikinase (346 aa).

Selenocysteine 16 is an active-site residue. Residue selenocysteine 16 is a non-standard amino acid, selenocysteine. Residues lysine 19 and 47-49 (TAD) each bind ATP. A Mg(2+)-binding site is contributed by aspartate 50. ATP contacts are provided by residues aspartate 67, aspartate 90, and 138–140 (GHS). Mg(2+) is bound at residue aspartate 90. A Mg(2+)-binding site is contributed by aspartate 226.

The protein belongs to the selenophosphate synthase 1 family. Class I subfamily. Homodimer. Requires Mg(2+) as cofactor.

It carries out the reaction hydrogenselenide + ATP + H2O = selenophosphate + AMP + phosphate + 2 H(+). Synthesizes selenophosphate from selenide and ATP. The polypeptide is Selenide, water dikinase (Haemophilus influenzae (strain ATCC 51907 / DSM 11121 / KW20 / Rd)).